We begin with the raw amino-acid sequence, 138 residues long: Large-conductance mechanosensitive channel (138 aa).

Helical transmembrane passes span 19-39 (VGVI…GDVI) and 81-101 (GSFL…FLVI).

This sequence belongs to the MscL family. As to quaternary structure, homopentamer.

The protein resides in the cell inner membrane. In terms of biological role, channel that opens in response to stretch forces in the membrane lipid bilayer. May participate in the regulation of osmotic pressure changes within the cell. The chain is Large-conductance mechanosensitive channel from Bradyrhizobium diazoefficiens (strain JCM 10833 / BCRC 13528 / IAM 13628 / NBRC 14792 / USDA 110).